Here is a 98-residue protein sequence, read N- to C-terminus: NADH-ubiquinone oxidoreductase chain 4L (98 aa).

The next 3 helical transmembrane spans lie at Pro2–Phe22, Ser29–Leu49, and Ile61–Val81.

The protein belongs to the complex I subunit 4L family. As to quaternary structure, core subunit of respiratory chain NADH dehydrogenase (Complex I) which is composed of 45 different subunits.

Its subcellular location is the mitochondrion inner membrane. The enzyme catalyses a ubiquinone + NADH + 5 H(+)(in) = a ubiquinol + NAD(+) + 4 H(+)(out). Functionally, core subunit of the mitochondrial membrane respiratory chain NADH dehydrogenase (Complex I) which catalyzes electron transfer from NADH through the respiratory chain, using ubiquinone as an electron acceptor. Part of the enzyme membrane arm which is embedded in the lipid bilayer and involved in proton translocation. The protein is NADH-ubiquinone oxidoreductase chain 4L (MT-ND4L) of Propithecus tattersalli (Golden-crowned Sifaka).